A 521-amino-acid polypeptide reads, in one-letter code: Histone deacetylase HDAC1 (521 aa).

The tract at residues 7-319 (KRVCYYYDSD…WTYETSVALA (313 aa)) is histone deacetylase. The active site involves histidine 139. Residues 376 to 521 (GVQIQAIPED…GAKGAKENNI (146 aa)) form a disordered region. A compositionally biased stretch (acidic residues) spans 386–395 (AINDESDDED). At serine 391 the chain carries Phosphoserine. Over residues 396-414 (KVDKDDRLPQSDKDKRIVP) the composition is skewed to basic and acidic residues. Residues serine 419, serine 421, and serine 455 each carry the phosphoserine modification. Threonine 457 carries the phosphothreonine modification. Residues 459-470 (SEIKDEKEKGDG) are compositionally biased toward basic and acidic residues. Positions 476-502 (STASNTNSNNNSNNKSDNDAGATANAG) are enriched in low complexity. The span at 503-513 (SGSGSGSGAGA) shows a compositional bias: gly residues.

It belongs to the histone deacetylase family. HD type 1 subfamily. In terms of assembly, component of a form of the Esc/E(z) complex present specifically during early embryogenesis which is composed of Caf1-55, esc, E(z), Su(z)12, Pcl and HDAC1. The Esc/E(z) complex may also associate with Pcl and HDAC1 during early embryogenesis. This complex is distinct from the PRC1 complex, which contains many other PcG proteins like Pc, Ph, Psc, Su(z)2. The 2 complexes however cooperate and interact together during the first 3 hours of development to establish PcG silencing. Interacts with the histone methyltransferase Su(var)3-9. Component of a complex that contains at least HDAC1, CoRest and Su(var)3-3/Hdm. Component of the DREAM complex at least composed of Myb, Caf1-55, mip40, mip120, mip130, E2f2, Dp, Rbf, Rbf2, lin-52, HDAC1 and l(3)mbt. Interacts with the chromatin-remodeler Mi-2. Interacts with Rrp6.

It localises to the nucleus. It carries out the reaction N(6)-acetyl-L-lysyl-[histone] + H2O = L-lysyl-[histone] + acetate. In terms of biological role, catalyzes the deacetylation of lysine residues on the N-terminal part of the core histones (H2A, H2B, H3 and H4). Histone deacetylation may constitute a tag for epigenetic repression and plays an important role in transcriptional regulation, cell cycle progression and developmental events. For instance, deacetylation of histone H3 may be a prerequisite for the subsequent recruitment of the histone methyltransferase Su(var)3-9 to histones. Involved in position-effect variegation (PEV). In the larval brain, part of a regulatory network including the transcriptional repressors klu, dpn and E(spl)mgamma-HLH which is required for type II neuroblast self-renewal and for maintaining erm in an inactive state in intermediate neural progenitors (INP). This is Histone deacetylase HDAC1 from Drosophila melanogaster (Fruit fly).